The following is a 341-amino-acid chain: Protein CbhE (341 aa).

Over residues Ile287 to Glu297 the composition is skewed to acidic residues. The interval Ile287–Cys341 is disordered. The segment covering Glu323–Ala332 has biased composition (basic and acidic residues).

The protein resides in the cytoplasm. Its function is as follows. May be involved in the pathogenesis of acute Q fever. The protein is Protein CbhE (cbhE) of Coxiella burnetii (strain RSA 493 / Nine Mile phase I).